The chain runs to 732 residues: Sesterbrasiliatriene synthase PbSS (732 aa).

The terpene cyclase stretch occupies residues 1 to 342 (MDFLSGAFHY…SRYHRDDLIT (342 aa)). Residues D105 and D109 each coordinate Mg(2+). Residues D105, D109, 193–196 (RLSE), 242–246 (FNKEF), and 334–335 (RY) contribute to the substrate site. A DDXXD 1 motif is present at residues 105–109 (DDVTD). The short motif at 238 to 246 (DYYSFNKEF) is the NSE/DTE element. Residues 343–732 (TAGDRAMIVG…ARILLLGLGL (390 aa)) are prenyltransferase. Disordered stretches follow at residues 371–390 (KSAT…WSDS) and 398–420 (ACYT…HKAN). Basic and acidic residues predominate over residues 411 to 420 (NGTEAGHKAN). The isopentenyl diphosphate site is built by K453, R456, and H485. Mg(2+) is bound by residues D492 and D496. The DDXXD 2 motif lies at 492–496 (DDIED). R501 lines the dimethylallyl diphosphate pocket. R502 contacts isopentenyl diphosphate. Positions 579, 580, 615, 622, 632, and 642 each coordinate dimethylallyl diphosphate.

This sequence in the N-terminal section; belongs to the terpene synthase family. The protein in the C-terminal section; belongs to the FPP/GGPP synthase family. In terms of assembly, hexamer. Mg(2+) is required as a cofactor.

The enzyme catalyses isopentenyl diphosphate + (2E,6E)-farnesyl diphosphate = (2E,6E,10E)-geranylgeranyl diphosphate + diphosphate. It catalyses the reaction isopentenyl diphosphate + (2E,6E,10E)-geranylgeranyl diphosphate = (2E,6E,10E,14E)-geranylfarnesyl diphosphate + diphosphate. It functions in the pathway secondary metabolite biosynthesis; terpenoid biosynthesis. In terms of biological role, bifunctional sesterterpene synthase that possesses both prenyl transferase and terpene cyclase activity, converting isopentenyl diphosphate and dimethylallyl diphosphate into geranylfarnesyl diphosphate (GFPP) and further converting GFPP into sesterbrasiliatriene. This Penicillium brasilianum protein is Sesterbrasiliatriene synthase PbSS (PbSS).